We begin with the raw amino-acid sequence, 313 residues long: Alpha/beta-gliadin clone PW8142 (313 aa).

Positions 1–20 (MKTFLILALVATTATTAVRV) are cleaved as a signal peptide. Over residues 22 to 55 (VPQLQPKNPSQQQPQEQVPLVQQQQFPGQQQQFP) the composition is skewed to low complexity. Disordered regions lie at residues 22–122 (VPQL…QQAQ) and 234–272 (QQPS…VQPQ). 2 stretches are compositionally biased toward pro residues: residues 56–68 (PQQP…PFPS) and 78–101 (FPQP…PQQP). 2 stretches are compositionally biased toward low complexity: residues 102–122 (YPQQ…QQAQ) and 234–264 (QQPS…QNPQ).

This sequence belongs to the gliadin/glutenin family. Post-translationally, substrate of transglutaminase.

In terms of biological role, gliadin is the major seed storage protein in wheat. In Triticum aestivum (Wheat), this protein is Alpha/beta-gliadin clone PW8142.